A 45-amino-acid polypeptide reads, in one-letter code: Large ribosomal subunit protein bL34 (45 aa).

A compositionally biased stretch (basic residues) spans 1–20; the sequence is MSKRTYQPNKRKRLKTHGFR. Residues 1-45 form a disordered region; the sequence is MSKRTYQPNKRKRLKTHGFRSRMSTASGRRIISCRRRKNRETLTA.

This sequence belongs to the bacterial ribosomal protein bL34 family.

The protein is Large ribosomal subunit protein bL34 of Tropheryma whipplei (strain Twist) (Whipple's bacillus).